A 522-amino-acid chain; its full sequence is Alanine aminotransferase 2 (522 aa).

Residue lysine 340 is modified to N6-(pyridoxal phosphate)lysine. An N6-acetyllysine mark is found at lysine 414, lysine 504, and lysine 511.

Belongs to the class-I pyridoxal-phosphate-dependent aminotransferase family. Alanine aminotransferase subfamily. Homodimer. Pyridoxal 5'-phosphate serves as cofactor. In terms of tissue distribution, specifically induced in fatty liver. Highly expressed in muscle, liver and white adipose tissue. Moderately expressed in brain and kidney and expressed at low levels in the heart.

It catalyses the reaction L-alanine + 2-oxoglutarate = pyruvate + L-glutamate. The protein operates within amino-acid degradation; L-alanine degradation via transaminase pathway; pyruvate from L-alanine: step 1/1. Catalyzes the reversible transamination between alanine and 2-oxoglutarate to form pyruvate and glutamate. This is Alanine aminotransferase 2 (Gpt2) from Mus musculus (Mouse).